Consider the following 178-residue polypeptide: Small ribosomal subunit protein uS5 (178 aa).

Residues 15 to 78 form the S5 DRBM domain; it reads FEEKIIEIRR…ADAKKNVIEV (64 aa).

Belongs to the universal ribosomal protein uS5 family. As to quaternary structure, part of the 30S ribosomal subunit. Contacts proteins S4 and S8.

Functionally, with S4 and S12 plays an important role in translational accuracy. Its function is as follows. Located at the back of the 30S subunit body where it stabilizes the conformation of the head with respect to the body. This Thermotoga neapolitana (strain ATCC 49049 / DSM 4359 / NBRC 107923 / NS-E) protein is Small ribosomal subunit protein uS5.